The primary structure comprises 591 residues: MKKISLPKIGIRPVIDGRRMGVRESLEEQTMNMAKATAALLTEKLRHACGAAVECVISDTCIAGMAEAAACEEKFSSQNVGLTITVTPCWCYGSETIDMDPTRPKAIWGFNGTERPGAVYLAAALAAHSQKGIPAFSIYGHDVQDADDTSIPADVEEKLLRFARAGLAVASMKGKSYLSLGGVSMGIAGSIVDHNFFESWLGMKVQAVDMTELRRRIDQKIYDEAELEMALAWADKNFRYGEDENNKQYQRNAEQSRAVLRESLLMAMCIRDMMQGNSKLADIGRVEESLGYNAIAAGFQGQRHWTDQYPNGDTAEAILNSSFDWNGVRKPFVVATENDSLNGVAMLMGHQLTGTAQVFADVRTYWSPEAIERVTGHKLDGLAEHGIIHLINSGSAALDGSCKQRDSEGKPTMKPHWEISQQEADACLAATEWCPAIHEYFRGGGYSSRFLTEGGVPFTMTRVNIIKGLGPVLQIAEGWSVELPKDVHDILNKRTNSTWPTTWFAPRLTGKGPFTDVYSVMANWGANHGVLTIGHVGADFITLASMLRIPVCMHNVEETKVYRPSAWAAHGMDIEGQDYRACQNYGPLYKR.

Residues E337 and D361 each act as proton acceptor in the active site. Mn(2+) is bound by residues E337, D361, and H528.

The protein belongs to the L-fucose isomerase family. As to quaternary structure, homohexamer. It depends on Mn(2+) as a cofactor.

It localises to the cytoplasm. The enzyme catalyses L-fucose = L-fuculose. It functions in the pathway carbohydrate degradation; L-fucose degradation; L-lactaldehyde and glycerone phosphate from L-fucose: step 1/3. Its function is as follows. Converts the aldose L-fucose into the corresponding ketose L-fuculose. The polypeptide is L-fucose isomerase (Escherichia coli (strain UTI89 / UPEC)).